Consider the following 504-residue polypeptide: Lysine--tRNA ligase (504 aa).

Mg(2+) is bound by residues Glu-411 and Glu-418.

The protein belongs to the class-II aminoacyl-tRNA synthetase family. As to quaternary structure, homodimer. Mg(2+) serves as cofactor.

The protein localises to the cytoplasm. It catalyses the reaction tRNA(Lys) + L-lysine + ATP = L-lysyl-tRNA(Lys) + AMP + diphosphate. The sequence is that of Lysine--tRNA ligase from Clostridium botulinum (strain Loch Maree / Type A3).